A 576-amino-acid polypeptide reads, in one-letter code: Adenine deaminase 2 (576 aa).

The protein belongs to the metallo-dependent hydrolases superfamily. Adenine deaminase family. It depends on Mn(2+) as a cofactor.

The catalysed reaction is adenine + H2O + H(+) = hypoxanthine + NH4(+). This Desulfotalea psychrophila (strain LSv54 / DSM 12343) protein is Adenine deaminase 2.